The primary structure comprises 95 residues: MDIYSIIKKPVFTEKALNLKESQNKVVIEVHPDVNKVQVKKAFEEIFKVKVDSVSIINVKPKIKRVGLHFTKTKKTKKAIVTLKAGEKLDLIEGV.

Belongs to the universal ribosomal protein uL23 family. In terms of assembly, part of the 50S ribosomal subunit. Contacts protein L29, and trigger factor when it is bound to the ribosome.

One of the early assembly proteins it binds 23S rRNA. One of the proteins that surrounds the polypeptide exit tunnel on the outside of the ribosome. Forms the main docking site for trigger factor binding to the ribosome. This Thermodesulfovibrio yellowstonii (strain ATCC 51303 / DSM 11347 / YP87) protein is Large ribosomal subunit protein uL23.